The primary structure comprises 490 residues: Betaine aldehyde dehydrogenase (490 aa).

K(+) is bound by residues serine 26, isoleucine 27, and aspartate 93. NAD(+) is bound at residue 150–152 (GAW). The active-site Charge relay system is the lysine 162. NAD(+) is bound by residues 176–179 (KPSE) and 230–233 (GVET). Leucine 246 is a K(+) binding site. Glutamate 252 functions as the Proton acceptor in the catalytic mechanism. NAD(+) contacts are provided by glycine 254, cysteine 286, and glutamate 387. Catalysis depends on cysteine 286, which acts as the Nucleophile. Cysteine sulfenic acid (-SOH) is present on cysteine 286. 2 residues coordinate K(+): lysine 457 and glycine 460. Glutamate 464 functions as the Charge relay system in the catalytic mechanism.

The protein belongs to the aldehyde dehydrogenase family. As to quaternary structure, dimer of dimers. K(+) serves as cofactor.

It carries out the reaction betaine aldehyde + NAD(+) + H2O = glycine betaine + NADH + 2 H(+). Its pathway is amine and polyamine biosynthesis; betaine biosynthesis via choline pathway; betaine from betaine aldehyde: step 1/1. Functionally, involved in the biosynthesis of the osmoprotectant glycine betaine. Catalyzes the irreversible oxidation of betaine aldehyde to the corresponding acid. This chain is Betaine aldehyde dehydrogenase, found in Acinetobacter baumannii (strain AB307-0294).